A 478-amino-acid polypeptide reads, in one-letter code: Deoxyribodipyrimidine photo-lyase (478 aa).

The Photolyase/cryptochrome alpha/beta domain occupies 2-136 (NVNLMWFRND…IINCFHDSVL (135 aa)). Glutamate 110 contributes to the (6R)-5,10-methylene-5,6,7,8-tetrahydrofolate binding site. Residues tyrosine 227 and 239–243 (TSMLS) each bind FAD. Interaction with DNA regions lie at residues 279-286 (ELLWREFY) and 346-347 (NR). An FAD-binding site is contributed by 377–379 (DGD). Glutamine 409 lines the DNA pocket.

Belongs to the DNA photolyase class-1 family. Monomer. It depends on FAD as a cofactor. The cofactor is (6R)-5,10-methylene-5,6,7,8-tetrahydrofolate.

It carries out the reaction cyclobutadipyrimidine (in DNA) = 2 pyrimidine residues (in DNA).. Functionally, involved in repair of UV radiation-induced DNA damage. Catalyzes the light-dependent monomerization (300-600 nm) of cyclobutyl pyrimidine dimers (in cis-syn configuration), which are formed between adjacent bases on the same DNA strand upon exposure to ultraviolet radiation. The polypeptide is Deoxyribodipyrimidine photo-lyase (phrB) (Buchnera aphidicola subsp. Baizongia pistaciae (strain Bp)).